The following is a 335-amino-acid chain: Glyceraldehyde-3-phosphate dehydrogenase (335 aa).

NAD(+)-binding positions include 12–13 (RI), Asp-34, Arg-78, and Ser-120. D-glyceraldehyde 3-phosphate is bound by residues 151–153 (SCT) and Thr-182. The Nucleophile role is filled by Cys-152. NAD(+) is bound at residue Asn-183. D-glyceraldehyde 3-phosphate-binding positions include Arg-197, 210-211 (TG), and Arg-233. An NAD(+)-binding site is contributed by Asn-315.

It belongs to the glyceraldehyde-3-phosphate dehydrogenase family. As to quaternary structure, homotetramer.

The protein resides in the cytoplasm. It catalyses the reaction D-glyceraldehyde 3-phosphate + phosphate + NAD(+) = (2R)-3-phospho-glyceroyl phosphate + NADH + H(+). Its pathway is carbohydrate degradation; glycolysis; pyruvate from D-glyceraldehyde 3-phosphate: step 1/5. In terms of biological role, catalyzes the oxidative phosphorylation of glyceraldehyde 3-phosphate (G3P) to 1,3-bisphosphoglycerate (BPG) using the cofactor NAD. The first reaction step involves the formation of a hemiacetal intermediate between G3P and a cysteine residue, and this hemiacetal intermediate is then oxidized to a thioester, with concomitant reduction of NAD to NADH. The reduced NADH is then exchanged with the second NAD, and the thioester is attacked by a nucleophilic inorganic phosphate to produce BPG. This chain is Glyceraldehyde-3-phosphate dehydrogenase (gap), found in Priestia megaterium (strain DSM 319 / IMG 1521) (Bacillus megaterium).